The primary structure comprises 372 residues: Fatty acid 2-hydroxylase (372 aa).

The 79-residue stretch at A8 to R86 folds into the Cytochrome b5 heme-binding domain. Heme is bound by residues H43 and H69. 2 helical membrane-spanning segments follow: residues V168–Y188 and S213–I233. The 143-residue stretch at F219–T361 folds into the Fatty acid hydroxylase domain. Residues H234, H239, H257, H260, and H261 each coordinate Zn(2+). The next 2 helical transmembrane spans lie at S268–L288 and L290–L310. Zn(2+)-binding residues include H315, H319, H336, H339, and H340.

This sequence belongs to the sterol desaturase family. SCS7 subfamily. Zn(2+) is required as a cofactor. As to expression, detected in oligodendrocytes (at protein level). Detected in sciatic nerve.

The protein localises to the endoplasmic reticulum membrane. Its subcellular location is the microsome membrane. The enzyme catalyses a 1,2-saturated fatty acid + 2 Fe(II)-[cytochrome b5] + O2 + 2 H(+) = a (R)-2-hydroxy fatty acid + 2 Fe(III)-[cytochrome b5] + H2O. It catalyses the reaction hexadecanoate + 2 Fe(II)-[cytochrome b5] + O2 + 2 H(+) = (R)-2-hydroxyhexadecanoate + 2 Fe(III)-[cytochrome b5] + H2O. The catalysed reaction is octadecanoate + 2 Fe(II)-[cytochrome b5] + O2 + 2 H(+) = (R)-2-hydroxyoctadecanoate + 2 Fe(III)-[cytochrome b5] + H2O. It carries out the reaction docosanoate + 2 Fe(II)-[cytochrome b5] + O2 + 2 H(+) = 2-hydroxydocosanoate + 2 Fe(III)-[cytochrome b5] + H2O. The enzyme catalyses tetracosanoate + 2 Fe(II)-[cytochrome b5] + O2 + 2 H(+) = (R)-2-hydroxytetracosanoate + 2 Fe(III)-[cytochrome b5] + H2O. The protein operates within lipid metabolism; fatty acid metabolism. Its pathway is sphingolipid metabolism; galactosylceramide biosynthesis. Its function is as follows. Catalyzes the hydroxylation of free fatty acids at the C-2 position to produce 2-hydroxy fatty acids, which are building blocks of sphingolipids and glycosphingolipids common in neural tissue and epidermis. FA2H is stereospecific for the production of (R)-2-hydroxy fatty acids. Plays an essential role in the synthesis of galactosphingolipids of the myelin sheath. Responsible for the synthesis of sphingolipids and glycosphingolipids involved in the formation of epidermal lamellar bodies critical for skin permeability barrier. Participates in the synthesis of glycosphingolipids and a fraction of type II wax diesters in sebaceous gland, specifically regulating hair follicle homeostasis. Involved in the synthesis of sphingolipids of plasma membrane rafts, controlling lipid raft mobility and trafficking of raft-associated proteins. In Rattus norvegicus (Rat), this protein is Fatty acid 2-hydroxylase.